A 495-amino-acid chain; its full sequence is Trimethylamine methyltransferase MttB2 (495 aa).

Pyl334 is a non-standard amino acid (pyrrolysine).

The protein belongs to the trimethylamine methyltransferase family. Can form a complex with MttC.

It carries out the reaction Co(I)-[trimethylamine-specific corrinoid protein] + trimethylamine + H(+) = methyl-Co(III)-[trimethylamine-specific corrinoid protein] + dimethylamine. It functions in the pathway one-carbon metabolism; methanogenesis from trimethylamine. In terms of biological role, catalyzes the transfer of a methyl group from trimethylamine to the corrinoid cofactor of MttC. This Methanosarcina mazei (strain ATCC BAA-159 / DSM 3647 / Goe1 / Go1 / JCM 11833 / OCM 88) (Methanosarcina frisia) protein is Trimethylamine methyltransferase MttB2 (mttB2).